The following is a 631-amino-acid chain: PTS system glucosamine-specific EIICBA component (631 aa).

The PTS EIIC type-1 domain occupies Lys3–Thr382. 8 helical membrane passes run Leu12–Phe32, Leu56–Ala76, His106–Tyr126, Ile149–Ile169, Leu196–Glu216, Phe243–Ile263, Phe298–Val318, and Val350–Ile370. Residues Asp397–Ala478 enclose the PTS EIIB type-1 domain. The Phosphocysteine intermediate; for EIIB activity role is filled by Cys419. Residue Cys419 is modified to Phosphocysteine. In terms of domain architecture, PTS EIIA type-1 spans Asp515–Asn619. Catalysis depends on His567, which acts as the Tele-phosphohistidine intermediate; for EIIA activity. Position 567 is a phosphohistidine (His567).

The protein localises to the cell membrane. It catalyses the reaction D-glucosamine(out) + N(pros)-phospho-L-histidyl-[protein] = D-glucosamine 6-phosphate(in) + L-histidyl-[protein]. The phosphoenolpyruvate-dependent sugar phosphotransferase system (sugar PTS), a major carbohydrate active transport system, catalyzes the phosphorylation of incoming sugar substrates concomitantly with their translocation across the cell membrane. This system is involved in glucosamine transport. In vitro, when expressed in the absence of GamR and NagP, can transport N-acetylglucosamine. Its function is as follows. In addition, plays an important role in the phosphorylation of EIIA-deficient PTS transporters. The EIIA domain can transfer a phosphoryl group to EIIA-deficient PTS transporters, enabling growth with maltose, N-acetylglucosamine, sucrose or trehalose as the sole carbon source. This chain is PTS system glucosamine-specific EIICBA component, found in Bacillus subtilis (strain 168).